The primary structure comprises 269 residues: Signal recognition particle receptor subunit beta (269 aa).

A helical membrane pass occupies residues 35-55 (LLSVAVALLAVLLTLVFWKFI). GTP contacts are provided by residues 69–77 (GLCDSGKTL) and 90–93 (TQTS). Residue S110 is modified to Phosphoserine. Residues G118 and 178–181 (NKQD) contribute to the GTP site. T212 bears the Phosphothreonine mark. A246 contacts GTP.

Belongs to the SRP receptor beta subunit family. In terms of assembly, heterodimer with SRPRA.

It is found in the endoplasmic reticulum membrane. Its function is as follows. Component of the SRP (signal recognition particle) receptor. Ensures, in conjunction with the signal recognition particle, the correct targeting of the nascent secretory proteins to the endoplasmic reticulum membrane system. May mediate the membrane association of SR. This chain is Signal recognition particle receptor subunit beta (Srprb), found in Mus musculus (Mouse).